A 605-amino-acid chain; its full sequence is Lysophospholipase 1 (605 aa).

Positions 1-17 are cleaved as a signal peptide; it reads MILHHLLILLIINYCVA. In terms of domain architecture, PLA2c spans 30–565; it reads SCPSSQLIRS…ENYCWDGTIY (536 aa). N-linked (GlcNAc...) asparagine glycosylation is found at Asn199, Asn261, Asn399, Asn451, Asn465, Asn492, and Asn573.

This sequence belongs to the lysophospholipase family.

It localises to the secreted. The enzyme catalyses a 1-acyl-sn-glycero-3-phosphocholine + H2O = sn-glycerol 3-phosphocholine + a fatty acid + H(+). Its function is as follows. Catalyzes the release of fatty acids from lysophospholipids. Phospholipase B may well contribute to pathogenicity by abetting the fungus in damaging and traversing host cell membranes, processes which likely increase the rapidity of disseminated infection. This chain is Lysophospholipase 1, found in Candida albicans (strain SC5314 / ATCC MYA-2876) (Yeast).